The sequence spans 198 residues: Nicotinamidase 3 (198 aa).

It belongs to the isochorismatase family.

It catalyses the reaction nicotinamide + H2O = nicotinate + NH4(+). Its pathway is cofactor biosynthesis; nicotinate biosynthesis; nicotinate from nicotinamide: step 1/1. Functionally, catalyzes the deamidation of nicotinamide, an early step in the NAD(+) salvage pathway. Prevents the accumulation of intracellular nicotinamide, a known inhibitor of poly(ADP-ribose) polymerases (PARP enzymes). This chain is Nicotinamidase 3, found in Arabidopsis thaliana (Mouse-ear cress).